A 147-amino-acid polypeptide reads, in one-letter code: Interleukin-4 (147 aa).

The signal sequence occupies residues Met1 to Gly19. N-linked (GlcNAc...) asparagine glycans are attached at residues Asn20, Asn61, Asn90, and Asn117. 2 disulfide bridges follow: Cys47–Cys87 and Cys69–Cys114.

This sequence belongs to the IL-4/IL-13 family.

The protein resides in the secreted. Participates in at least several B-cell activation processes as well as of other cell types. It is a costimulator of DNA-synthesis. It induces the expression of class II MHC molecules on resting B-cells. It enhances both secretion and cell surface expression of IgE and IgG1. It also regulates the expression of the low affinity Fc receptor for IgE (CD23) on both lymphocytes and monocytes. Positively regulates IL31RA expression in macrophages. Stimulates autophagy in dendritic cells by interfering with mTORC1 signaling and through the induction of RUFY4. The chain is Interleukin-4 (IL4) from Mesocricetus auratus (Golden hamster).